Consider the following 418-residue polypeptide: MAAPAKGMWCSLGSLLRVVQTRDLNARRWVRALRRSPVRVLSPSGQVEERKRAPDQQPRKAVPKASSQGQRQKQPLETSPSQTPHTWEEAGLRYDKAFPGDRRLSSVMTIVKSRPFREKQGKILLEGRRLIADALKAGAVPKAFFFSRLEYVKELPVDKLKDVSLIKVKFEDIKDWSDLVTPQGIMGIFAKPDPVKMTYPETPLHHTLPLVLICDNLRDPGNLGTILRSAAGAGCSKVLLTKGCVDAWEPKVLRAGMGAHFQVPIVNNVEWETVPNHLPPDTRVYVADNCGHYAQVQMSDKTGDRDWACDRRFLKFHKYEEDLDTKTRKDWLPKLEVQSYDLDWTGAPAAVVIGGETHGVSLESLQLAESTGGKRLLIPVVPGVDSLNSAMAASILLFEGKRQLRIKVEDLSRDRSYH.

The transit peptide at 1–40 directs the protein to the mitochondrion; it reads MAAPAKGMWCSLGSLLRVVQTRDLNARRWVRALRRSPVRV. Residues 41–90 form a disordered region; it reads LSPSGQVEERKRAPDQQPRKAVPKASSQGQRQKQPLETSPSQTPHTWEEA. The span at 47–58 shows a compositional bias: basic and acidic residues; it reads VEERKRAPDQQP. Residues 65 to 85 are compositionally biased toward polar residues; the sequence is ASSQGQRQKQPLETSPSQTPH. Residues Gly-354, Ile-378, and Leu-387 each coordinate S-adenosyl-L-methionine.

Belongs to the class IV-like SAM-binding methyltransferase superfamily. RNA methyltransferase TrmH family.

It localises to the mitochondrion. It carries out the reaction guanosine(1370) in 16S rRNA + S-adenosyl-L-methionine = 2'-O-methylguanosine(1370) in 16S rRNA + S-adenosyl-L-homocysteine + H(+). Functionally, S-adenosyl-L-methionine-dependent 2'-O-ribose methyltransferase that catalyzes the formation of 2'-O-methylguanosine at position 1370 (Gm1370) in the 16S mitochondrial large subunit ribosomal RNA (mtLSU rRNA), a conserved modification in the peptidyl transferase domain of the mtLSU rRNA. Also required for formation of 2'-O-methyluridine at position 1369 (Um1369) mediated by MRM2. The sequence is that of rRNA methyltransferase 3, mitochondrial from Mus musculus (Mouse).